Consider the following 157-residue polypeptide: MQNKKSYRPNVAAVILSSKYPEKCEFFVAHRTDIRNAWQFPQGGIDEGETPEDALYRELLEEIGCNNVEILGEFPEWITYDFPKTARGKVYPFDGQTQKYFLVRLKEEAQINLQAFEIPEFKEYTFVKYDELFQKVTYFKRKVYRRVIDHFIKEGLI.

The region spanning 6–149 (SYRPNVAAVI…KRKVYRRVID (144 aa)) is the Nudix hydrolase domain. The short motif at 43-64 (GGIDEGETPEDALYRELLEEIG) is the Nudix box element.

This sequence belongs to the Nudix hydrolase family. RppH subfamily. Requires a divalent metal cation as cofactor.

In terms of biological role, accelerates the degradation of transcripts by removing pyrophosphate from the 5'-end of triphosphorylated RNA, leading to a more labile monophosphorylated state that can stimulate subsequent ribonuclease cleavage. The protein is RNA pyrophosphohydrolase of Sulfurovum sp. (strain NBC37-1).